The chain runs to 207 residues: dTTP/UTP pyrophosphatase (207 aa).

Aspartate 87 serves as the catalytic Proton acceptor.

The protein belongs to the Maf family. YhdE subfamily. It depends on a divalent metal cation as a cofactor.

It is found in the cytoplasm. It catalyses the reaction dTTP + H2O = dTMP + diphosphate + H(+). The enzyme catalyses UTP + H2O = UMP + diphosphate + H(+). In terms of biological role, nucleoside triphosphate pyrophosphatase that hydrolyzes dTTP and UTP. May have a dual role in cell division arrest and in preventing the incorporation of modified nucleotides into cellular nucleic acids. The sequence is that of dTTP/UTP pyrophosphatase from Ralstonia nicotianae (strain ATCC BAA-1114 / GMI1000) (Ralstonia solanacearum).